Consider the following 304-residue polypeptide: Phosphoribosylaminoimidazole-succinocarboxamide synthase (304 aa).

It belongs to the SAICAR synthetase family.

It carries out the reaction 5-amino-1-(5-phospho-D-ribosyl)imidazole-4-carboxylate + L-aspartate + ATP = (2S)-2-[5-amino-1-(5-phospho-beta-D-ribosyl)imidazole-4-carboxamido]succinate + ADP + phosphate + 2 H(+). The protein operates within purine metabolism; IMP biosynthesis via de novo pathway; 5-amino-1-(5-phospho-D-ribosyl)imidazole-4-carboxamide from 5-amino-1-(5-phospho-D-ribosyl)imidazole-4-carboxylate: step 1/2. The sequence is that of Phosphoribosylaminoimidazole-succinocarboxamide synthase (ADE1) from Komagataella pastoris (Yeast).